The chain runs to 28 residues: Conotoxin Cal6.43b (28 aa).

Disulfide bonds link Cys-3–Cys-13, Cys-7–Cys-19, and Cys-12–Cys-25.

In terms of tissue distribution, expressed by the venom duct.

The protein resides in the secreted. Functionally, probable neurotoxin with unknown target. Possibly targets ion channels. This chain is Conotoxin Cal6.43b, found in Californiconus californicus (California cone).